The sequence spans 84 residues: Cryptic plasmid protein A (84 aa).

The chain is Cryptic plasmid protein A (cppA) from Neisseria gonorrhoeae.